A 126-amino-acid polypeptide reads, in one-letter code: 13 kDa ribonucleoprotein-associated protein (126 aa).

Belongs to the eukaryotic ribosomal protein eL8 family. As to quaternary structure, component of the U3 snoRNP particle. Binds to the C'/D and B/C motifs in U3 snoRNA. Component of the 25S U4/U6.U5 tri-snRNP particle, a subcomplex of the spliceosome. Binds to the 5' stem-loop of U4 snRNA.

The protein resides in the nucleus. It localises to the nucleolus. Common component of the spliceosome and rRNA processing machinery. In association with the spliceosomal U4/U6.U5 tri-snRNP particle, required for splicing of pre-mRNA. In association with box C/D snoRNPs, required for processing of pre-ribosomal RNA (rRNA) and site-specific 2'-O-methylation of substrate RNAs. Essential for the accumulation and stability of U4 snRNA, U6 snRNA, and box C/D snoRNAs. The polypeptide is 13 kDa ribonucleoprotein-associated protein (SNU13) (Kluyveromyces lactis (strain ATCC 8585 / CBS 2359 / DSM 70799 / NBRC 1267 / NRRL Y-1140 / WM37) (Yeast)).